We begin with the raw amino-acid sequence, 109 residues long: Nucleoid-associated protein Cvib_1034 (109 aa).

The protein belongs to the YbaB/EbfC family. Homodimer.

The protein resides in the cytoplasm. It is found in the nucleoid. Functionally, binds to DNA and alters its conformation. May be involved in regulation of gene expression, nucleoid organization and DNA protection. This is Nucleoid-associated protein Cvib_1034 from Chlorobium phaeovibrioides (strain DSM 265 / 1930) (Prosthecochloris vibrioformis (strain DSM 265)).